The sequence spans 215 residues: MSACLGFRELGLQPYEPVLEAMRRFTEQRSPDSQDEIWLVEHPAVFTQGQAGKAEHLLVPGDIPVVQTDRGGQVTYHGPGQLVAYLLLDVRRLGFGVRELVSRIELALIDLLASYAVQASAKPDAPGVYVDGAKIASLGLRIRNGRSFHGLALNVDMDLAPFRRINPCGYAGLAMTQLRDLAGPIELDEVRTRLRGQLVKHLDYAEQTTLTGGID.

Residues 31 to 206 (PDSQDEIWLV…QLVKHLDYAE (176 aa)) enclose the BPL/LPL catalytic domain. Residues 70-77 (RGGQVTYH), 137-139 (SLG), and 150-152 (GLA) each bind substrate. Catalysis depends on cysteine 168, which acts as the Acyl-thioester intermediate.

It belongs to the LipB family.

The protein localises to the cytoplasm. The enzyme catalyses octanoyl-[ACP] + L-lysyl-[protein] = N(6)-octanoyl-L-lysyl-[protein] + holo-[ACP] + H(+). Its pathway is protein modification; protein lipoylation via endogenous pathway; protein N(6)-(lipoyl)lysine from octanoyl-[acyl-carrier-protein]: step 1/2. In terms of biological role, catalyzes the transfer of endogenously produced octanoic acid from octanoyl-acyl-carrier-protein onto the lipoyl domains of lipoate-dependent enzymes. Lipoyl-ACP can also act as a substrate although octanoyl-ACP is likely to be the physiological substrate. In Pseudomonas putida (strain ATCC 700007 / DSM 6899 / JCM 31910 / BCRC 17059 / LMG 24140 / F1), this protein is Octanoyltransferase.